A 353-amino-acid chain; its full sequence is S-adenosylmethionine:tRNA ribosyltransferase-isomerase (353 aa).

The protein belongs to the QueA family. In terms of assembly, monomer.

It is found in the cytoplasm. The enzyme catalyses 7-aminomethyl-7-carbaguanosine(34) in tRNA + S-adenosyl-L-methionine = epoxyqueuosine(34) in tRNA + adenine + L-methionine + 2 H(+). Its pathway is tRNA modification; tRNA-queuosine biosynthesis. In terms of biological role, transfers and isomerizes the ribose moiety from AdoMet to the 7-aminomethyl group of 7-deazaguanine (preQ1-tRNA) to give epoxyqueuosine (oQ-tRNA). This is S-adenosylmethionine:tRNA ribosyltransferase-isomerase from Maricaulis maris (strain MCS10) (Caulobacter maris).